A 351-amino-acid polypeptide reads, in one-letter code: Protein RecA (351 aa).

Residue 67–74 (GPESSGKT) coordinates ATP.

This sequence belongs to the RecA family.

The protein localises to the cytoplasm. In terms of biological role, can catalyze the hydrolysis of ATP in the presence of single-stranded DNA, the ATP-dependent uptake of single-stranded DNA by duplex DNA, and the ATP-dependent hybridization of homologous single-stranded DNAs. It interacts with LexA causing its activation and leading to its autocatalytic cleavage. This is Protein RecA from Arthrobacter sp. (strain FB24).